A 377-amino-acid chain; its full sequence is MAAMWRAAARQLVDRAVGSRAAHTSAGSKKIVGVFYQAGEYADKNPNFVGCVEGALGIRDWLESKGHHYIVTDDKEGFNSELEKHIEDMHVLITTPFHPAYVTAEKIKKAKTPELLLTAGIGSDHIDLPAAAAAGLTVARVTGSNTVSVAEDELMRILILLRNFLPGYQQVVKGEWNVAGIAHRAYDLEGKTVGTVGAGRYGRLLLQRLKPFNCNLLYHDRLQINPELEKEIGAKFEEDLDAMLPKCDVVVINTPLTEKTRGMFNKEKIAKMKKGVIIVNNARGAIMDTQAVADACSSGHIAGYGGDVWFPQPAPKDHPWRYMPNHAMTPHISGTTIDAQLRYAAGVKDMLDRYFKGEEFPVENYIVKEGELASQYK.

Residues 1–29 (MAAMWRAAARQLVDRAVGSRAAHTSAGSK) constitute a mitochondrion transit peptide. The substrate site is built by isoleucine 121 and asparagine 145. NAD(+)-binding positions include threonine 146, aspartate 220, 255–259 (PLTEK), asparagine 281, aspartate 307, and 331–334 (HISG).

This sequence belongs to the D-isomer specific 2-hydroxyacid dehydrogenase family. FDH subfamily. In terms of assembly, homodimer.

Its subcellular location is the mitochondrion. The enzyme catalyses formate + NAD(+) = CO2 + NADH. Catalyzes the NAD(+)-dependent oxidation of formate to carbon dioxide. Involved in the cell stress response. This chain is Formate dehydrogenase, mitochondrial, found in Hordeum vulgare (Barley).